The following is a 639-amino-acid chain: UvrABC system protein C (639 aa).

One can recognise a GIY-YIG domain in the interval 20–97; it reads ERSGVYRMFD…IKKFQPKFNI (78 aa). The region spanning 207-242 is the UVR domain; sequence KELQENLSRKMEELSSQMRFEEAAEIRDRIKALSYV.

It belongs to the UvrC family. Interacts with UvrB in an incision complex.

Its subcellular location is the cytoplasm. Functionally, the UvrABC repair system catalyzes the recognition and processing of DNA lesions. UvrC both incises the 5' and 3' sides of the lesion. The N-terminal half is responsible for the 3' incision and the C-terminal half is responsible for the 5' incision. The chain is UvrABC system protein C from Rickettsia africae (strain ESF-5).